A 277-amino-acid polypeptide reads, in one-letter code: Large ribosomal subunit protein uL2 (277 aa).

Disordered regions lie at residues 35 to 57 (RPLHSKGGRNVHGRITTRHQGGG) and 222 to 277 (GVAM…NRRR). 2 stretches are compositionally biased toward basic residues: residues 37-57 (LHSKGGRNVHGRITTRHQGGG) and 268-277 (VRRRKQNRRR).

This sequence belongs to the universal ribosomal protein uL2 family. In terms of assembly, part of the 50S ribosomal subunit. Forms a bridge to the 30S subunit in the 70S ribosome.

In terms of biological role, one of the primary rRNA binding proteins. Required for association of the 30S and 50S subunits to form the 70S ribosome, for tRNA binding and peptide bond formation. It has been suggested to have peptidyltransferase activity; this is somewhat controversial. Makes several contacts with the 16S rRNA in the 70S ribosome. The protein is Large ribosomal subunit protein uL2 of Frankia casuarinae (strain DSM 45818 / CECT 9043 / HFP020203 / CcI3).